Reading from the N-terminus, the 330-residue chain is Ketol-acid reductoisomerase (NADP(+)) (330 aa).

One can recognise a KARI N-terminal Rossmann domain in the interval 1 to 181 (MNIYYEQDAD…GGTKAGVIET (181 aa)). Residues 24–27 (YGSQ), lysine 47, serine 50, serine 52, and 82–85 (DQTQ) contribute to the NADP(+) site. Residue histidine 107 is part of the active site. Glycine 133 serves as a coordination point for NADP(+). One can recognise a KARI C-terminal knotted domain in the interval 182 to 327 (SFKDETETDL…AKLRGMMSWL (146 aa)). The Mg(2+) site is built by aspartate 190, glutamate 194, glutamate 226, and glutamate 230. Position 251 (serine 251) interacts with substrate.

The protein belongs to the ketol-acid reductoisomerase family. Mg(2+) is required as a cofactor.

The catalysed reaction is (2R)-2,3-dihydroxy-3-methylbutanoate + NADP(+) = (2S)-2-acetolactate + NADPH + H(+). It carries out the reaction (2R,3R)-2,3-dihydroxy-3-methylpentanoate + NADP(+) = (S)-2-ethyl-2-hydroxy-3-oxobutanoate + NADPH + H(+). Its pathway is amino-acid biosynthesis; L-isoleucine biosynthesis; L-isoleucine from 2-oxobutanoate: step 2/4. The protein operates within amino-acid biosynthesis; L-valine biosynthesis; L-valine from pyruvate: step 2/4. In terms of biological role, involved in the biosynthesis of branched-chain amino acids (BCAA). Catalyzes an alkyl-migration followed by a ketol-acid reduction of (S)-2-acetolactate (S2AL) to yield (R)-2,3-dihydroxy-isovalerate. In the isomerase reaction, S2AL is rearranged via a Mg-dependent methyl migration to produce 3-hydroxy-3-methyl-2-ketobutyrate (HMKB). In the reductase reaction, this 2-ketoacid undergoes a metal-dependent reduction by NADPH to yield (R)-2,3-dihydroxy-isovalerate. This chain is Ketol-acid reductoisomerase (NADP(+)), found in Chlorobaculum tepidum (strain ATCC 49652 / DSM 12025 / NBRC 103806 / TLS) (Chlorobium tepidum).